The sequence spans 267 residues: 4-hydroxy-tetrahydrodipicolinate reductase (267 aa).

Residue 8-13 participates in NAD(+) binding; sequence GASGRM. Position 35 (R35) interacts with NADP(+). Residues 98 to 100 and 122 to 125 contribute to the NAD(+) site; these read GTT and APNM. H155 functions as the Proton donor/acceptor in the catalytic mechanism. H156 contributes to the (S)-2,3,4,5-tetrahydrodipicolinate binding site. K159 acts as the Proton donor in catalysis. 165-166 is a (S)-2,3,4,5-tetrahydrodipicolinate binding site; that stretch reads GT.

Belongs to the DapB family.

The protein resides in the cytoplasm. The enzyme catalyses (S)-2,3,4,5-tetrahydrodipicolinate + NAD(+) + H2O = (2S,4S)-4-hydroxy-2,3,4,5-tetrahydrodipicolinate + NADH + H(+). The catalysed reaction is (S)-2,3,4,5-tetrahydrodipicolinate + NADP(+) + H2O = (2S,4S)-4-hydroxy-2,3,4,5-tetrahydrodipicolinate + NADPH + H(+). The protein operates within amino-acid biosynthesis; L-lysine biosynthesis via DAP pathway; (S)-tetrahydrodipicolinate from L-aspartate: step 4/4. Catalyzes the conversion of 4-hydroxy-tetrahydrodipicolinate (HTPA) to tetrahydrodipicolinate. The polypeptide is 4-hydroxy-tetrahydrodipicolinate reductase (Hahella chejuensis (strain KCTC 2396)).